Reading from the N-terminus, the 529-residue chain is Bifunctional purine biosynthesis protein PurH (529 aa).

One can recognise an MGS-like domain in the interval 1-148; the sequence is MEQSFLPIRC…KNYKYVTVVV (148 aa).

Belongs to the PurH family.

It carries out the reaction (6R)-10-formyltetrahydrofolate + 5-amino-1-(5-phospho-beta-D-ribosyl)imidazole-4-carboxamide = 5-formamido-1-(5-phospho-D-ribosyl)imidazole-4-carboxamide + (6S)-5,6,7,8-tetrahydrofolate. The enzyme catalyses IMP + H2O = 5-formamido-1-(5-phospho-D-ribosyl)imidazole-4-carboxamide. It participates in purine metabolism; IMP biosynthesis via de novo pathway; 5-formamido-1-(5-phospho-D-ribosyl)imidazole-4-carboxamide from 5-amino-1-(5-phospho-D-ribosyl)imidazole-4-carboxamide (10-formyl THF route): step 1/1. The protein operates within purine metabolism; IMP biosynthesis via de novo pathway; IMP from 5-formamido-1-(5-phospho-D-ribosyl)imidazole-4-carboxamide: step 1/1. This chain is Bifunctional purine biosynthesis protein PurH, found in Wigglesworthia glossinidia brevipalpis.